Consider the following 311-residue polypeptide: Meteorin-like protein (311 aa).

Residues Met-1 to Ala-45 form the signal peptide. Cysteines 52 and 75 form a disulfide. Residue Asn-103 is glycosylated (N-linked (GlcNAc...) asparagine). Cystine bridges form between Cys-107–Cys-143, Cys-188–Cys-260, Cys-191–Cys-284, and Cys-201–Cys-306.

This sequence belongs to the meteorin family. In terms of tissue distribution, abundantly expressed in adipose tissue.

The protein resides in the secreted. Its function is as follows. Hormone induced following exercise or cold exposure that promotes energy expenditure. Induced either in the skeletal muscle after exercise or in adipose tissue following cold exposure and is present in the circulation. Able to stimulate energy expenditure associated with the browning of the white fat depots and improves glucose tolerance. Does not promote an increase in a thermogenic gene program via direct action on adipocytes, but acts by stimulating several immune cell subtypes to enter the adipose tissue and activate their prothermogenic actions. Stimulates an eosinophil-dependent increase in IL4 expression and promotes alternative activation of adipose tissue macrophages, which are required for the increased expression of the thermogenic and anti-inflammatory gene programs in fat. Required for some cold-induced thermogenic responses, suggesting a role in metabolic adaptations to cold temperatures. This Rattus norvegicus (Rat) protein is Meteorin-like protein (Metrnl).